The primary structure comprises 191 residues: MSIKSDRWIRKMAEEHGMIEPFEAGQVRFNDAGERLVSYGTSSYGYDVRCAPEFKVFTNVHSVIVDPKNFDEKSFIDVIGDECIIPPNSFALARTMEYFRIPRDVLTICLGKSTYARCGIIVNVTPLEPEWEGHVTLEFSNTTNLPARIYAGEGVAQMLFFQSDADDVCETSYKDRGGKYQGQRGVTLPRT.

Residues 112–117 (KSTYAR), 136–138 (TLE), glutamine 157, tyrosine 173, and glutamine 183 each bind dCTP. The active-site Proton donor/acceptor is glutamate 138.

The protein belongs to the dCTP deaminase family. Homotrimer.

The catalysed reaction is dCTP + H2O + H(+) = dUTP + NH4(+). It functions in the pathway pyrimidine metabolism; dUMP biosynthesis; dUMP from dCTP (dUTP route): step 1/2. Functionally, catalyzes the deamination of dCTP to dUTP. This chain is dCTP deaminase, found in Psychrobacter cryohalolentis (strain ATCC BAA-1226 / DSM 17306 / VKM B-2378 / K5).